A 629-amino-acid chain; its full sequence is Chaperone protein HtpG (629 aa).

Residues 1 to 343 (MQKQTLSFQA…SSDLPLNVSR (343 aa)) are a; substrate-binding. The b stretch occupies residues 344–558 (ELLQESRAVK…DGDMSTQLAR (215 aa)). The tract at residues 559–629 (MLKQAGQTVP…YVRRVNALLV (71 aa)) is c.

The protein belongs to the heat shock protein 90 family. In terms of assembly, homodimer.

It is found in the cytoplasm. Its function is as follows. Molecular chaperone. Has ATPase activity. In Polaromonas naphthalenivorans (strain CJ2), this protein is Chaperone protein HtpG.